The following is a 757-amino-acid chain: MDVNPTLLFLKVPAQNAISTTFPYTGDPPYSHGTGTGYTMDTVNRTHQYSEKGKWTTNTETGAPQLNPIDGPLPEDNEPSGYAQTDCVLEAMAFLEESHPGIFENSCLETMEVVQQTRVDKLTQGRQTYDWTLNRNQPAATALANTIEVFRSNGLTANESGRLIDFLKDVMESMDKEEMEITTHFQRKRRVRDNMTKKMVTQRTIGKKKQRLNKRSYLIRALTLNTMTKDAERGKLKRRAIATPGMQIRGFVYFVETLARSICEKLEQSGLPVGGNEKKAKLANVVRKMMTNSQDTELSFTITGDNTKWNENQNPRMFLAMITYITRNQPEWFRNVLSIAPIMFSNKMARLGKGYMFESKSMKLRTQIPTEMLASIDLKYFNEPTRKKIEKIRPLLIDGTASLSPGMMMGMFNMLSTVLGVSILNLGQKRYTKTTYWWDGLQSSDDFALIVNAPDHEGIQAGVDRFYRTCKLVGINMSKKKSYINRTGTFEFTSFFYRYGFVANFSMELPSFGVSGINESADMSIGVTVIKNNMINNDLGPATAQMALQLFIKDYRYTYRCHRGDTQIQTRRSFELKKLWEQTRSKAGLLVSDGGPNLYNIRNLHIPEVCLKWELMDEDYQGRLCNPLNPFVSHKEIESVNNAVVMPAHGPAKSMEYDAVATTHSWIPKRNRSILNTSQRGILEDEQMYQKCCNLFEKFFPSSSYRRPVGISSMVEAMVSRARIDARIDFESGRIKKEEFAEIMKICSTIEELRRQK.

The interval 50 to 82 is disordered; sequence SEKGKWTTNTETGAPQLNPIDGPLPEDNEPSGY. Polar residues predominate over residues 55–64; it reads WTTNTETGAP. 2 short sequence motifs (nuclear localization signal) span residues 187–195 and 203–216; these read RKRRVRDNM and RTIG…NKRS. The interval 249 to 256 is promoter-binding site; it reads RGFVYFVE. Positions 286–483 constitute a RdRp catalytic domain; the sequence is VRKMMTNSQD…GINMSKKKSY (198 aa).

Belongs to the influenza viruses polymerase PB1 family. Influenza RNA polymerase is composed of three subunits: PB1, PB2 and PA. Interacts (via N-terminus) with PA (via C-terminus). Interacts (via C-terminus) with PB2 (via N-terminus); this interaction is essential for transcription initiation. Phosphorylated by host PRKCA.

The protein resides in the host nucleus. It is found in the host cytoplasm. The enzyme catalyses RNA(n) + a ribonucleoside 5'-triphosphate = RNA(n+1) + diphosphate. Functionally, RNA-dependent RNA polymerase which is responsible for replication and transcription of virus RNA segments. The transcription of viral mRNAs occurs by a unique mechanism called cap-snatching. 5' methylated caps of cellular mRNAs are cleaved after 10-13 nucleotides by PA. In turn, these short capped RNAs are used as primers by PB1 for transcription of viral mRNAs. During virus replication, PB1 initiates RNA synthesis and copy vRNA into complementary RNA (cRNA) which in turn serves as a template for the production of more vRNAs. The protein is RNA-directed RNA polymerase catalytic subunit of Aves.